The primary structure comprises 482 residues: tRNA sulfurtransferase (482 aa).

A THUMP domain is found at 61–165 (LAIRDALTRI…DDRLLLIKGR (105 aa)). ATP-binding positions include 183–184 (LI), K265, G287, and Q296. A disulfide bridge connects residues C344 and C456. The region spanning 404-482 (FGANDVILDI…GFANVKVYRP (79 aa)) is the Rhodanese domain. The active-site Cysteine persulfide intermediate is C456.

The protein belongs to the ThiI family.

It is found in the cytoplasm. The enzyme catalyses [ThiI sulfur-carrier protein]-S-sulfanyl-L-cysteine + a uridine in tRNA + 2 reduced [2Fe-2S]-[ferredoxin] + ATP + H(+) = [ThiI sulfur-carrier protein]-L-cysteine + a 4-thiouridine in tRNA + 2 oxidized [2Fe-2S]-[ferredoxin] + AMP + diphosphate. The catalysed reaction is [ThiS sulfur-carrier protein]-C-terminal Gly-Gly-AMP + S-sulfanyl-L-cysteinyl-[cysteine desulfurase] + AH2 = [ThiS sulfur-carrier protein]-C-terminal-Gly-aminoethanethioate + L-cysteinyl-[cysteine desulfurase] + A + AMP + 2 H(+). The protein operates within cofactor biosynthesis; thiamine diphosphate biosynthesis. Catalyzes the ATP-dependent transfer of a sulfur to tRNA to produce 4-thiouridine in position 8 of tRNAs, which functions as a near-UV photosensor. Also catalyzes the transfer of sulfur to the sulfur carrier protein ThiS, forming ThiS-thiocarboxylate. This is a step in the synthesis of thiazole, in the thiamine biosynthesis pathway. The sulfur is donated as persulfide by IscS. The protein is tRNA sulfurtransferase of Salmonella typhi.